Here is a 434-residue protein sequence, read N- to C-terminus: Probable proline transporter 2 (434 aa).

The next 11 membrane-spanning stretches (helical) occupy residues 26 to 46 (PWYQ…VLGY), 49 to 69 (SVMV…AAAI), 106 to 126 (LTWA…IILA), 149 to 169 (IALS…LSAL), 171 to 191 (IWLG…FVLS), 213 to 233 (IFTT…GMLP), 251 to 271 (LWFQ…MGYW), 297 to 317 (LSAF…MYEF), 339 to 359 (VGVR…LPFL), 362 to 382 (FMSL…ANHM), and 403 to 423 (VAGF…LIMV).

It belongs to the amino acid/polyamine transporter 2 family. Amino acid/auxin permease (AAAP) (TC 2.A.18.3) subfamily.

It localises to the cell membrane. Its function is as follows. Proline transporter that mediates proline transport across the plasma membrane. This is Probable proline transporter 2 from Oryza sativa subsp. japonica (Rice).